The primary structure comprises 396 residues: Period circadian protein (396 aa).

Disordered regions lie at residues 27–120 (VTAP…APPV), 164–188 (LEYS…WEGE), 253–273 (GGNG…TNQY), and 333–362 (SPSS…TSQA). Gly residues predominate over residues 93-114 (GTSGTGNSGDGGGGGGANGTGS). The span at 253-262 (GGNGNVGSGN) shows a compositional bias: gly residues. Residues 333 to 342 (SPSSTNTNPN) are compositionally biased toward low complexity.

Forms a heterodimer with timeless (TIM); the complex then translocates into the nucleus. Phosphorylated with a circadian rhythmicity, probably by the double-time protein (dbt). Phosphorylation could be implicated in the stability of per monomer and in the formation of heterodimer per-tim.

It is found in the nucleus. The protein resides in the cytoplasm. Its subcellular location is the perinuclear region. Functionally, essential for biological clock functions. Determines the period length of circadian and ultradian rhythms; an increase in PER dosage leads to shortened circadian rhythms and a decrease leads to lengthened circadian rhythms. Essential for the circadian rhythmicity of locomotor activity, eclosion behavior, and for the rhythmic component of the male courtship song that originates in the thoracic nervous system. The biological cycle depends on the rhythmic formation and nuclear localization of the TIM-PER complex. Light induces the degradation of TIM, which promotes elimination of PER. Nuclear activity of the heterodimer coordinatively regulates PER and TIM transcription through a negative feedback loop. Behaves as a negative element in circadian transcriptional loop. Does not appear to bind DNA, suggesting indirect transcriptional inhibition. The sequence is that of Period circadian protein (per) from Drosophila pavlovskiana (Fruit fly).